The chain runs to 608 residues: UvrABC system protein C (608 aa).

The region spanning 13-91 is the GIY-YIG domain; sequence HDPGVYRMFD…IKTFQPRYNV (79 aa). Residues 201-236 form the UVR domain; that stretch reads QQVLDHLIAKMETASRALDFENAARFRDQIQAVRAV.

Belongs to the UvrC family. Interacts with UvrB in an incision complex.

It localises to the cytoplasm. Its function is as follows. The UvrABC repair system catalyzes the recognition and processing of DNA lesions. UvrC both incises the 5' and 3' sides of the lesion. The N-terminal half is responsible for the 3' incision and the C-terminal half is responsible for the 5' incision. The protein is UvrABC system protein C of Actinobacillus succinogenes (strain ATCC 55618 / DSM 22257 / CCUG 43843 / 130Z).